The following is a 180-amino-acid chain: MQNPQNLIWIDLEMTGLNPDTDVIIEMATIVTDSNLNTLAEGPVIAIHQSDEILAGMDEWNTRQHGGSGLTQRVRESRISMAEAEAQTIAFLEQWVPKGKSPICGNSICQDRRFLYRHMKALESYFHYRNLDVSTLKELAARWAPDVRDSFKKGSTHLALDDIRESIAELQHYRKHFIKF.

Positions Leu7–Leu170 constitute an Exonuclease domain. Tyr128 is an active-site residue.

Belongs to the oligoribonuclease family.

The protein localises to the cytoplasm. 3'-to-5' exoribonuclease specific for small oligoribonucleotides. In Pseudomonas fluorescens (strain ATCC BAA-477 / NRRL B-23932 / Pf-5), this protein is Oligoribonuclease.